We begin with the raw amino-acid sequence, 175 residues long: Large ribosomal subunit protein uL10 (175 aa).

The protein belongs to the universal ribosomal protein uL10 family. In terms of assembly, part of the ribosomal stalk of the 50S ribosomal subunit. The N-terminus interacts with L11 and the large rRNA to form the base of the stalk. The C-terminus forms an elongated spine to which L12 dimers bind in a sequential fashion forming a multimeric L10(L12)X complex.

In terms of biological role, forms part of the ribosomal stalk, playing a central role in the interaction of the ribosome with GTP-bound translation factors. The protein is Large ribosomal subunit protein uL10 of Prochlorococcus marinus (strain MIT 9211).